The following is a 204-amino-acid chain: Photosystem I reaction center subunit II-2, chloroplastic (204 aa).

The transit peptide at 1–44 directs the protein to the chloroplast; that stretch reads MATQAAGIFSPAITTTTSAVKKLHLFSSSHRPKSLSFTKTAIRA. Phosphothreonine is present on Thr-47. The disordered stretch occupies residues 47 to 71; the sequence is TESSSAAPAVKEAPVGFTPPQLDPN. The ferredoxin and ferredoxin-oxidoreductase binding stretch occupies residues 137 to 145; the sequence is RLRSKYKIT.

It belongs to the PsaD family. As to quaternary structure, interacts with CURT1C.

It is found in the plastid. It localises to the chloroplast thylakoid membrane. Functionally, PSAD can form complexes with ferredoxin and ferredoxin-oxidoreductase in photosystem I (PS I) reaction center. PSAD may encode the ferredoxin-docking protein. The chain is Photosystem I reaction center subunit II-2, chloroplastic (PSAD2) from Arabidopsis thaliana (Mouse-ear cress).